The following is a 159-amino-acid chain: Phosphopantetheine adenylyltransferase (159 aa).

A substrate-binding site is contributed by threonine 9. ATP contacts are provided by residues 9-10 and histidine 17; that span reads TF. 3 residues coordinate substrate: lysine 41, leucine 73, and arginine 87. ATP-binding positions include 88-90, glutamate 98, and 123-129; these read GLR and YSFISST.

It belongs to the bacterial CoaD family. As to quaternary structure, homohexamer. It depends on Mg(2+) as a cofactor.

The protein resides in the cytoplasm. The catalysed reaction is (R)-4'-phosphopantetheine + ATP + H(+) = 3'-dephospho-CoA + diphosphate. The protein operates within cofactor biosynthesis; coenzyme A biosynthesis; CoA from (R)-pantothenate: step 4/5. Reversibly transfers an adenylyl group from ATP to 4'-phosphopantetheine, yielding dephospho-CoA (dPCoA) and pyrophosphate. The chain is Phosphopantetheine adenylyltransferase from Pseudomonas syringae pv. syringae (strain B728a).